Here is a 371-residue protein sequence, read N- to C-terminus: MSKIASEVVATTLNDWYIAIKKQKVDESIKYYSEIKKLFDEMEEDQEVLAYYSLLEERHKMLLHSSRGEPLQKHTYFTEDNQNFITKTNDKLEYNFYLFEAMYEAYNKNYDRAINLYGLAEKKLAEIPDEIEAAEFYSKVSYLYTLVKQSIVAQHYIKNAISIYKRHPDYKCKLATSTMIAAANYADMKRFEEAEQYYLEAIDIAKETKDEFLKAQLFHNLSIVYSDWNKPDKCIESLEKAIGNESWLHSIYYINSLFMMIKELFKIDEKMKAINFYNKAQERLILMENKVYEAKISILYNLYCGELKNNFNNCISNIEFLKQQNELESVDELSYIAAKRFESIGAFEEATSFFNAKIWAEQKMNQVEGIL.

TPR repeat units follow at residues 7-42 (EVVA…FDEM), 93-130 (EYNF…IPDE), 175-208 (ATST…AKET), 215-248 (AQLF…ESWL), 254-290 (INSL…MENK), and 331-364 (DELS…EQKM).

The protein belongs to the Rap family.

It localises to the cytoplasm. With respect to regulation, inhibited by PhrK, which prevents RapK-ComA interaction. In terms of biological role, involved in the regulation of genetic competence development. Inhibits the activity of ComA, a transcriptional factor that regulates the development of genetic competence. Likely affects the activity of additional regulators, in particular Spo0A. The chain is Regulatory protein RapK (rapK) from Bacillus subtilis (strain 168).